Here is a 212-residue protein sequence, read N- to C-terminus: Methylthioribulose-1-phosphate dehydratase (212 aa).

Zn(2+)-binding residues include His97 and His99.

It belongs to the aldolase class II family. MtnB subfamily. Homotetramer. Requires Zn(2+) as cofactor.

It carries out the reaction 5-(methylsulfanyl)-D-ribulose 1-phosphate = 5-methylsulfanyl-2,3-dioxopentyl phosphate + H2O. It functions in the pathway amino-acid biosynthesis; L-methionine biosynthesis via salvage pathway; L-methionine from S-methyl-5-thio-alpha-D-ribose 1-phosphate: step 2/6. Its function is as follows. Catalyzes the dehydration of methylthioribulose-1-phosphate (MTRu-1-P) into 2,3-diketo-5-methylthiopentyl-1-phosphate (DK-MTP-1-P). The protein is Methylthioribulose-1-phosphate dehydratase of Bacillus cytotoxicus (strain DSM 22905 / CIP 110041 / 391-98 / NVH 391-98).